Reading from the N-terminus, the 283-residue chain is MQQLEKQSDLASWHGRLSLTYEKKAHQTQVQQSYHQAPLNLQRPFYPEGPVCHSVMMHTAGGMVGGDRLSINVTLQPQTHALLTTTSAGKVYRSNGHGAQQTVQCQLDTNAILEWLPLGTIVFDQAQFRQTLQVELGPGAIFCGWDLTRFGRSARGERFMQGDWRSHTEIWQQGAPLWIDRQWLPGQPDIWESPHGLAGQPVVGSFLWVGQGVEPNLVQTARDLWQPTTDGAEMGVTRLPLGLVCRYRGPSSQAARQWFIQVWNLLRSTHLGRPACPPRVWPL.

Belongs to the UreD family. As to quaternary structure, ureD, UreF and UreG form a complex that acts as a GTP-hydrolysis-dependent molecular chaperone, activating the urease apoprotein by helping to assemble the nickel containing metallocenter of UreC. The UreE protein probably delivers the nickel.

The protein localises to the cytoplasm. In terms of biological role, required for maturation of urease via the functional incorporation of the urease nickel metallocenter. The protein is Urease accessory protein UreD of Acaryochloris marina (strain MBIC 11017).